The chain runs to 439 residues: Xylose isomerase (439 aa).

Residues His101 and Asp104 contribute to the active site. Mg(2+) is bound by residues Glu232, Glu268, His271, Asp296, Asp307, Asp309, and Asp339.

This sequence belongs to the xylose isomerase family. As to quaternary structure, homotetramer. Requires Mg(2+) as cofactor.

The protein localises to the cytoplasm. It catalyses the reaction alpha-D-xylose = alpha-D-xylulofuranose. The polypeptide is Xylose isomerase (xylA) (Thermoanaerobacterium thermosaccharolyticum (strain ATCC 7956 / DSM 571 / NCIMB 9385 / NCA 3814 / NCTC 13789 / WDCM 00135 / 2032) (Clostridium thermosaccharolyticum)).